The sequence spans 184 residues: Dirigent protein 14 (184 aa).

The first 20 residues, 1 to 20 (MANQIYLFSLICLSVLLCQS), serve as a signal peptide directing secretion. A disulfide bond links C36 and C182. N-linked (GlcNAc...) asparagine glycosylation is found at N55 and N119.

The protein belongs to the plant dirigent protein family. As to quaternary structure, homodimer.

It localises to the secreted. The protein resides in the extracellular space. It is found in the apoplast. Its function is as follows. Dirigent proteins impart stereoselectivity on the phenoxy radical-coupling reaction, yielding optically active lignans from two molecules of coniferyl alcohol in the biosynthesis of lignans, flavonolignans, and alkaloids and thus plays a central role in plant secondary metabolism. The protein is Dirigent protein 14 (DIR14) of Arabidopsis thaliana (Mouse-ear cress).